We begin with the raw amino-acid sequence, 294 residues long: MAASIIDGKVIAADLRARVAGEVTRIKRDHGLTPGLAVVLVGNDPASEVYVRNKHKQTQAAGMASFEHMLPADVAQADVLALIAELNADPAVHGILVQLPLPKGLDTEAIIAAIDPAKDVDGLHPHNAGRLAGGLSALSPCTPLGCIILTKSVHASLEGLDAIVIGRSNLVGRPLVQLLLNENATVTIAHSRSRNLPELCRRADLVYAAVGRAEMVRGDWLKPGATVIDVGITRVPAAEGKTRLIGDVAFDEAMQVAGAVTPVPGGVGQMTVACLLVNTLRAACAIEGLSAPGV.

NADP(+)-binding positions include 166 to 168 (GRS), Ser-191, and Ile-232.

The protein belongs to the tetrahydrofolate dehydrogenase/cyclohydrolase family. In terms of assembly, homodimer.

It carries out the reaction (6R)-5,10-methylene-5,6,7,8-tetrahydrofolate + NADP(+) = (6R)-5,10-methenyltetrahydrofolate + NADPH. The enzyme catalyses (6R)-5,10-methenyltetrahydrofolate + H2O = (6R)-10-formyltetrahydrofolate + H(+). The protein operates within one-carbon metabolism; tetrahydrofolate interconversion. In terms of biological role, catalyzes the oxidation of 5,10-methylenetetrahydrofolate to 5,10-methenyltetrahydrofolate and then the hydrolysis of 5,10-methenyltetrahydrofolate to 10-formyltetrahydrofolate. The sequence is that of Bifunctional protein FolD from Nitrobacter winogradskyi (strain ATCC 25391 / DSM 10237 / CIP 104748 / NCIMB 11846 / Nb-255).